The following is a 153-amino-acid chain: Pheromone-binding protein Gp-9 (153 aa).

A signal peptide spans 1 to 19 (MKTFVLHIFIFALVAFASA). 3 cysteine pairs are disulfide-bonded: cysteine 37-cysteine 77, cysteine 73-cysteine 129, and cysteine 118-cysteine 138.

This sequence belongs to the PBP/GOBP family. As to quaternary structure, homodimer.

The protein resides in the secreted. Functionally, colony queen number, a major feature of social organization, is associated with worker genotype for Gp-9. Colonies are headed by either a single reproductive queen (monogyne form) or multiple queens (polygyne form). Differences in worker Gp-9 genotypes between social forms may cause differences in workers' abilities to recognize queens and regulate their numbers. This is Pheromone-binding protein Gp-9 from Solenopsis interrupta (Fire ant).